A 135-amino-acid polypeptide reads, in one-letter code: Putative nickel-responsive regulator (135 aa).

Residues His79, His90, His92, and Cys98 each coordinate Ni(2+).

This sequence belongs to the transcriptional regulatory CopG/NikR family. Ni(2+) is required as a cofactor.

Functionally, transcriptional regulator. In Dictyoglomus turgidum (strain DSM 6724 / Z-1310), this protein is Putative nickel-responsive regulator.